The primary structure comprises 218 residues: Large ribosomal subunit protein uL3 (218 aa).

The interval 132-152 (FKGQGASHGTQAVHRRPGSIG) is disordered.

This sequence belongs to the universal ribosomal protein uL3 family. As to quaternary structure, part of the 50S ribosomal subunit. Forms a cluster with proteins L14 and L19.

Its function is as follows. One of the primary rRNA binding proteins, it binds directly near the 3'-end of the 23S rRNA, where it nucleates assembly of the 50S subunit. The chain is Large ribosomal subunit protein uL3 from Rhodococcus erythropolis (strain PR4 / NBRC 100887).